The chain runs to 604 residues: Cell division cycle protein CDT1 (604 aa).

This sequence belongs to the Cdt1 family. As to quaternary structure, associates with the MCM2-7 complex. Interacts with MCM2, ORC1, ORC2 and ORC6.

It is found in the cytoplasm. The protein localises to the nucleus. Functionally, DNA replication licensing factor, required for pre-replication complex assembly. Faithful duplication of the genetic material requires 'once per cell cycle' DNA replication initiation and elongation. Central to this control is the tightly regulated formation of prereplicative complexes (preRCs) at future origins of DNA replication. Required for the recruitment of the MCM2-7 helicase complex to the replication origins. In Saccharomyces cerevisiae (strain ATCC 204508 / S288c) (Baker's yeast), this protein is Cell division cycle protein CDT1 (TAH11).